The primary structure comprises 121 residues: Small ribosomal subunit protein uS13 (121 aa).

Residues 94 to 121 (GLPVRGQNTKNNSRTRKGPRRTVANKKK) form a disordered region. Basic residues predominate over residues 106-121 (SRTRKGPRRTVANKKK).

Belongs to the universal ribosomal protein uS13 family. Part of the 30S ribosomal subunit. Forms a loose heterodimer with protein S19. Forms two bridges to the 50S subunit in the 70S ribosome.

In terms of biological role, located at the top of the head of the 30S subunit, it contacts several helices of the 16S rRNA. In the 70S ribosome it contacts the 23S rRNA (bridge B1a) and protein L5 of the 50S subunit (bridge B1b), connecting the 2 subunits; these bridges are implicated in subunit movement. Contacts the tRNAs in the A and P-sites. The polypeptide is Small ribosomal subunit protein uS13 (Exiguobacterium sibiricum (strain DSM 17290 / CCUG 55495 / CIP 109462 / JCM 13490 / 255-15)).